The sequence spans 471 residues: Chitobiosyldiphosphodolichol beta-mannosyltransferase (471 aa).

The Lumenal segment spans residues 1 to 31; that stretch reads MDTSSVTMHTERACCHQAQRAVAAMLDKAPS. The helical transmembrane segment at 32 to 52 threads the bilayer; it reads WLIWTAVLYVGLPFMLYWAVP. The Cytoplasmic portion of the chain corresponds to 53-126; the sequence is YLFYHNKTKS…ALPGASNAGK (74 aa). An intramembrane region (helical) is located at residues 127–147; the sequence is SLGQTARKVVLQTCHIVRQLW. The Cytoplasmic portion of the chain corresponds to 148–471; sequence ELRGCDYILI…MSELQVVRQS (324 aa).

This sequence belongs to the glycosyltransferase group 1 family.

It is found in the endoplasmic reticulum membrane. The catalysed reaction is an N,N'-diacetylchitobiosyl-diphospho-di-trans,poly-cis-dolichol + GDP-alpha-D-mannose = a beta-D-Man-(1-&gt;4)-beta-D-GlcNAc-(1-&gt;4)-alpha-D-GlcNAc-diphospho-di-trans,poly-cis-dolichol + GDP + H(+). It functions in the pathway protein modification; protein glycosylation. Participates in the formation of the lipid-linked precursor oligosaccharide for N-glycosylation. Involved in assembling the dolichol-pyrophosphate-GlcNAc(2)-Man(5) intermediate on the cytoplasmic surface of the ER. The chain is Chitobiosyldiphosphodolichol beta-mannosyltransferase (ALG1) from Eremothecium gossypii (strain ATCC 10895 / CBS 109.51 / FGSC 9923 / NRRL Y-1056) (Yeast).